A 185-amino-acid chain; its full sequence is CASP-like protein 2C3 (185 aa).

At 1–13 the chain is on the cytoplasmic side; that stretch reads MAAAARVSEVKAE. A helical transmembrane segment spans residues 14-34; it reads GLLRGACAALAAAAALLVGLS. Residues 35–53 lie on the Extracellular side of the membrane; that stretch reads TQTETVLLVRKKATVKDVQ. The helical transmembrane segment at 54–74 threads the bilayer; it reads ALWVLAMAAAAAAGYHLLQLL. Residues 75-104 lie on the Cytoplasmic side of the membrane; the sequence is KCLYLGRVGGARPCRRSSRALAWTCLLLDK. The chain crosses the membrane as a helical span at residues 105–125; sequence ACAYTTFATTVAAAQACVVAL. Over 126 to 146 the chain is Extracellular; that stretch reads DGAHAVQWTKLCNIYTRFCEQ. A helical membrane pass occupies residues 147–167; that stretch reads VAGSLVLGMLAAVGTAVLSAA. The Cytoplasmic portion of the chain corresponds to 168–185; sequence SARNVFRHYSSLETYAAH.

This sequence belongs to the Casparian strip membrane proteins (CASP) family. As to quaternary structure, homodimer and heterodimers.

Its subcellular location is the cell membrane. The sequence is that of CASP-like protein 2C3 from Zea mays (Maize).